A 184-amino-acid polypeptide reads, in one-letter code: Casparian strip membrane protein 3 (184 aa).

The Cytoplasmic segment spans residues 1–24; the sequence is MEGSEEHGETSKAPLSRGVSKGVS. Residues 25 to 45 traverse the membrane as a helical segment; it reads ILDVILRFVAIIGTLASAIAM. The Extracellular segment spans residues 46–72; it reads GTTNQTLPFFTQFIRFKAQYSDLPTLT. N-linked (GlcNAc...) asparagine glycosylation occurs at N49. Residues 73 to 93 traverse the membrane as a helical segment; the sequence is FFVVANSIVSAYLILSLPLSI. Topologically, residues 94 to 105 are cytoplasmic; it reads VHVIRSRAKYSR. A helical membrane pass occupies residues 106–126; that stretch reads LILIFFDAAMLALVTAGASAA. Over 127 to 159 the chain is Extracellular; it reads AAIVYLAHKGNARANWLAICQQFDSFCERISGS. A helical transmembrane segment spans residues 160–180; sequence LIGSFAAMVVLVLLIFLSAIA. Residues 181 to 184 lie on the Cytoplasmic side of the membrane; it reads LARR.

It belongs to the Casparian strip membrane proteins (CASP) family. Homodimer and heterodimers.

It localises to the cell membrane. Regulates membrane-cell wall junctions and localized cell wall deposition. Required for establishment of the Casparian strip membrane domain (CSD) and the subsequent formation of Casparian strips, a cell wall modification of the root endodermis that determines an apoplastic barrier between the intraorganismal apoplasm and the extraorganismal apoplasm and prevents lateral diffusion. This is Casparian strip membrane protein 3 from Oryza sativa subsp. indica (Rice).